The chain runs to 393 residues: Formate-dependent phosphoribosylglycinamide formyltransferase (393 aa).

Residues 22–23 and glutamate 82 each bind N(1)-(5-phospho-beta-D-ribosyl)glycinamide; that span reads EL. ATP contacts are provided by residues arginine 114, lysine 155, 160-165, 195-198, and glutamate 203; these read SSGKGQ and EGFI. Residues 119–308 enclose the ATP-grasp domain; the sequence is RLAAEELDLP…QFALHARAIL (190 aa). Glutamate 267 and glutamate 279 together coordinate Mg(2+). N(1)-(5-phospho-beta-D-ribosyl)glycinamide contacts are provided by residues aspartate 286, lysine 356, and 363 to 364; that span reads RR.

It belongs to the PurK/PurT family. In terms of assembly, homodimer.

The enzyme catalyses N(1)-(5-phospho-beta-D-ribosyl)glycinamide + formate + ATP = N(2)-formyl-N(1)-(5-phospho-beta-D-ribosyl)glycinamide + ADP + phosphate + H(+). It functions in the pathway purine metabolism; IMP biosynthesis via de novo pathway; N(2)-formyl-N(1)-(5-phospho-D-ribosyl)glycinamide from N(1)-(5-phospho-D-ribosyl)glycinamide (formate route): step 1/1. Involved in the de novo purine biosynthesis. Catalyzes the transfer of formate to 5-phospho-ribosyl-glycinamide (GAR), producing 5-phospho-ribosyl-N-formylglycinamide (FGAR). Formate is provided by PurU via hydrolysis of 10-formyl-tetrahydrofolate. This Pseudomonas putida (strain ATCC 47054 / DSM 6125 / CFBP 8728 / NCIMB 11950 / KT2440) protein is Formate-dependent phosphoribosylglycinamide formyltransferase.